A 32-amino-acid chain; its full sequence is Photosystem II reaction center protein Psb30 (32 aa).

Residues 3–23 form a helical membrane-spanning segment; that stretch reads IVIVQLGSLALITLAGPIIIV.

This sequence belongs to the Psb30/Ycf12 family. As to quaternary structure, PSII is composed of 1 copy each of membrane proteins PsbA, PsbB, PsbC, PsbD, PsbE, PsbF, PsbH, PsbI, PsbJ, PsbK, PsbL, PsbM, PsbT, PsbY, PsbZ, Psb30/Ycf12, peripheral proteins of the oxygen-evolving complex and a large number of cofactors. It forms dimeric complexes.

It localises to the plastid. Its subcellular location is the chloroplast thylakoid membrane. A core subunit of photosystem II (PSII), probably helps stabilize the reaction center. This chain is Photosystem II reaction center protein Psb30, found in Euglena viridis (Cercaria viridis).